The chain runs to 1376 residues: Protein FAM135B (1376 aa).

Residues 431–442 (NEDECEFSEESP) are compositionally biased toward acidic residues. Residues 431 to 489 (NEDECEFSEESPSENTHVGSKPHSIQSTTVHENASFEKPNVGTKAQEDCSTEGPEQGFD) form a disordered region. Positions 443–462 (SENTHVGSKPHSIQSTTVHE) are enriched in polar residues.

Belongs to the FAM135 family.

This is Protein FAM135B (fam135b) from Xenopus laevis (African clawed frog).